Reading from the N-terminus, the 89-residue chain is Small ribosomal subunit protein uS17 (89 aa).

The protein belongs to the universal ribosomal protein uS17 family. In terms of assembly, part of the 30S ribosomal subunit.

Its function is as follows. One of the primary rRNA binding proteins, it binds specifically to the 5'-end of 16S ribosomal RNA. The sequence is that of Small ribosomal subunit protein uS17 from Baumannia cicadellinicola subsp. Homalodisca coagulata.